We begin with the raw amino-acid sequence, 208 residues long: Ribosomal RNA large subunit methyltransferase E (208 aa).

Residues Gly63, Trp65, Asp83, Asp99, and Asp124 each coordinate S-adenosyl-L-methionine. Lys164 acts as the Proton acceptor in catalysis.

Belongs to the class I-like SAM-binding methyltransferase superfamily. RNA methyltransferase RlmE family.

Its subcellular location is the cytoplasm. It carries out the reaction uridine(2552) in 23S rRNA + S-adenosyl-L-methionine = 2'-O-methyluridine(2552) in 23S rRNA + S-adenosyl-L-homocysteine + H(+). Functionally, specifically methylates the uridine in position 2552 of 23S rRNA at the 2'-O position of the ribose in the fully assembled 50S ribosomal subunit. This chain is Ribosomal RNA large subunit methyltransferase E, found in Alcanivorax borkumensis (strain ATCC 700651 / DSM 11573 / NCIMB 13689 / SK2).